We begin with the raw amino-acid sequence, 179 residues long: Large ribosomal subunit protein uL5 (179 aa).

Belongs to the universal ribosomal protein uL5 family. Part of the 50S ribosomal subunit; part of the 5S rRNA/L5/L18/L25 subcomplex. Contacts the 5S rRNA and the P site tRNA. Forms a bridge to the 30S subunit in the 70S ribosome.

Its function is as follows. This is one of the proteins that bind and probably mediate the attachment of the 5S RNA into the large ribosomal subunit, where it forms part of the central protuberance. In the 70S ribosome it contacts protein S13 of the 30S subunit (bridge B1b), connecting the 2 subunits; this bridge is implicated in subunit movement. Contacts the P site tRNA; the 5S rRNA and some of its associated proteins might help stabilize positioning of ribosome-bound tRNAs. The polypeptide is Large ribosomal subunit protein uL5 (Lysinibacillus sphaericus (strain C3-41)).